The primary structure comprises 453 residues: ACT domain-containing protein ACR3 (453 aa).

4 consecutive ACT domains span residues 37 to 112 (LVKV…SASQ), 130 to 212 (SIEI…KFAR), 266 to 341 (VINV…RVSE), and 344 to 423 (SLEL…VPSR).

Expressed in roots, cotyledons, rosette and cauline leaves, sepals, style, and pedicels and tips of young developing siliques.

Its function is as follows. May bind amino acids. The protein is ACT domain-containing protein ACR3 of Arabidopsis thaliana (Mouse-ear cress).